A 183-amino-acid polypeptide reads, in one-letter code: Bifunctional protein PyrR (183 aa).

The PRPP-binding motif lies at 98–110 (VVLVDDVLYTGRT).

This sequence belongs to the purine/pyrimidine phosphoribosyltransferase family. PyrR subfamily.

It catalyses the reaction UMP + diphosphate = 5-phospho-alpha-D-ribose 1-diphosphate + uracil. Functionally, regulates the transcription of the pyrimidine nucleotide (pyr) operon in response to exogenous pyrimidines. In terms of biological role, also displays a weak uracil phosphoribosyltransferase activity which is not physiologically significant. In Roseiflexus sp. (strain RS-1), this protein is Bifunctional protein PyrR.